Consider the following 133-residue polypeptide: Transcription antitermination protein NusB (133 aa).

Belongs to the NusB family.

In terms of biological role, involved in transcription antitermination. Required for transcription of ribosomal RNA (rRNA) genes. Binds specifically to the boxA antiterminator sequence of the ribosomal RNA (rrn) operons. This chain is Transcription antitermination protein NusB, found in Pediococcus pentosaceus (strain ATCC 25745 / CCUG 21536 / LMG 10740 / 183-1w).